The following is a 739-amino-acid chain: ABC transporter G family member 20 (739 aa).

The region spanning 88-351 (LSFKDLTYSV…FSEFGHPIPE (264 aa)) is the ABC transporter domain. 144–151 (GASGSGKS) is a binding site for ATP. The 211-residue stretch at 433–643 (TEMLVIGKRS…PYEGVLQNEF (211 aa)) folds into the ABC transmembrane type-2 domain. Helical transmembrane passes span 452 to 472 (LFGI…TIFW), 487 to 507 (FFAF…PVFL), 528 to 548 (VLAH…AFAA), 563 to 583 (FLFF…FVTF), 593 to 613 (IGFT…GFFI), and 712 to 732 (LWIT…TLLI).

Belongs to the ABC transporter superfamily. ABCG family. Eye pigment precursor importer (TC 3.A.1.204) subfamily.

It localises to the membrane. This chain is ABC transporter G family member 20 (ABCG20), found in Arabidopsis thaliana (Mouse-ear cress).